A 309-amino-acid polypeptide reads, in one-letter code: Thermolabile glutaminase (309 aa).

Substrate-binding residues include Ser-64, Asn-114, Glu-160, Asn-167, Tyr-191, Tyr-243, and Val-261.

Belongs to the glutaminase family. Homotetramer.

The enzyme catalyses L-glutamine + H2O = L-glutamate + NH4(+). The chain is Thermolabile glutaminase (glsA) from Rhizobium etli (strain ATCC 51251 / DSM 11541 / JCM 21823 / NBRC 15573 / CFN 42).